A 308-amino-acid polypeptide reads, in one-letter code: Ornithine carbamoyltransferase (308 aa).

Carbamoyl phosphate-binding positions include 56 to 59, Gln-83, Arg-107, and 134 to 137; these read STRT and HPCQ. L-ornithine is bound by residues Asn-165, Asp-225, and 229–230; that span reads SM. Residues 266–267 and Arg-294 contribute to the carbamoyl phosphate site; that span reads CL.

Belongs to the aspartate/ornithine carbamoyltransferase superfamily. OTCase family.

The protein localises to the cytoplasm. The enzyme catalyses carbamoyl phosphate + L-ornithine = L-citrulline + phosphate + H(+). It functions in the pathway amino-acid biosynthesis; L-arginine biosynthesis; L-arginine from L-ornithine and carbamoyl phosphate: step 1/3. Reversibly catalyzes the transfer of the carbamoyl group from carbamoyl phosphate (CP) to the N(epsilon) atom of ornithine (ORN) to produce L-citrulline. The sequence is that of Ornithine carbamoyltransferase from Roseobacter denitrificans (strain ATCC 33942 / OCh 114) (Erythrobacter sp. (strain OCh 114)).